We begin with the raw amino-acid sequence, 520 residues long: DNA mismatch repair protein MutL (520 aa).

Belongs to the DNA mismatch repair MutL/HexB family.

Functionally, this protein is involved in the repair of mismatches in DNA. It is required for dam-dependent methyl-directed DNA mismatch repair. May act as a 'molecular matchmaker', a protein that promotes the formation of a stable complex between two or more DNA-binding proteins in an ATP-dependent manner without itself being part of a final effector complex. The chain is DNA mismatch repair protein MutL from Persephonella marina (strain DSM 14350 / EX-H1).